We begin with the raw amino-acid sequence, 165 residues long: MTDSELMQLSEQVGQALKARGATVTTAESCTGGWVAKVITDIAGSSAWFERGFVTYSNEAKAQMIGVREETLAQHGAVSEPVVVEMAIGALKAARADYAVSISGIAGPDGGSEEKPVGTVWFAFATARGEGITWRECFSGDRDAVRRQATAYALQTLWQQFLQNT.

The protein belongs to the CinA family. PncC subfamily. In terms of assembly, homodimer.

The catalysed reaction is beta-nicotinamide D-ribonucleotide + H2O = nicotinate beta-D-ribonucleotide + NH4(+). In terms of biological role, has NMN aminohydrolase activity, not active on other substrates. The chain is Nicotinamide-nucleotide amidohydrolase PncC (pncC) from Shigella flexneri.